A 501-amino-acid chain; its full sequence is Pyruvate kinase (501 aa).

Arginine 50 serves as a coordination point for substrate. Asparagine 52, serine 54, aspartate 85, and threonine 86 together coordinate K(+). 52-55 provides a ligand contact to ATP; that stretch reads NFSH. Residues arginine 92 and lysine 178 each coordinate ATP. Glutamate 243 contacts Mg(2+). The substrate site is built by glycine 266, aspartate 267, and threonine 299. Residue aspartate 267 participates in Mg(2+) binding.

This sequence belongs to the pyruvate kinase family. Homotetramer. Mg(2+) is required as a cofactor. The cofactor is K(+).

It catalyses the reaction pyruvate + ATP = phosphoenolpyruvate + ADP + H(+). Its pathway is carbohydrate degradation; glycolysis; pyruvate from D-glyceraldehyde 3-phosphate: step 5/5. The chain is Pyruvate kinase (PYK1) from Kluyveromyces lactis (strain ATCC 8585 / CBS 2359 / DSM 70799 / NBRC 1267 / NRRL Y-1140 / WM37) (Yeast).